The primary structure comprises 419 residues: MDKFRVQGPTTLQGEVTISGAKNAALPILFAALLAEEPVEIQNVPKLKDVDTSMKLLSQLGAKVERNGSVHIDASQVNVFCAPYDLVKTMRASIWALGPLVARFGQGQVSLPGGCTIGARPVDLHITGLEQLGATIKLEEGYVKASVEGRLKGAHIVMDKVSVGATVTIMCAATLAEGTTIIENAAREPEIVDTANFLVTLGAKIAGQGTDRITIEGVERLGSGVYRVLPDRIETGTFLVAAAISRGKILCRNAQPDTLDAVLAKLRDAGADIEVGEDWISLDMHGKRPKAVNVRTAPHPAFPTDMQAQFTLLNLVAEGTGFITETVFENRFMHVPELSRMGARAEIESNTVICHGIETLSGAQVMATDLRASASLVLAGCIAEGTTIVDRIYHIDRGYERIEDKLRALGANIERVKGE.

22 to 23 (KN) provides a ligand contact to phosphoenolpyruvate. Residue Arg-91 coordinates UDP-N-acetyl-alpha-D-glucosamine. Cys-115 serves as the catalytic Proton donor. Cys-115 bears the 2-(S-cysteinyl)pyruvic acid O-phosphothioketal mark. Residues 120 to 124 (RPVDL), 160 to 163 (KVSV), Asp-305, and Val-327 each bind UDP-N-acetyl-alpha-D-glucosamine.

This sequence belongs to the EPSP synthase family. MurA subfamily.

It is found in the cytoplasm. The catalysed reaction is phosphoenolpyruvate + UDP-N-acetyl-alpha-D-glucosamine = UDP-N-acetyl-3-O-(1-carboxyvinyl)-alpha-D-glucosamine + phosphate. It functions in the pathway cell wall biogenesis; peptidoglycan biosynthesis. Cell wall formation. Adds enolpyruvyl to UDP-N-acetylglucosamine. This Salmonella gallinarum (strain 287/91 / NCTC 13346) protein is UDP-N-acetylglucosamine 1-carboxyvinyltransferase.